The chain runs to 258 residues: MLEAKFEEASLFKRIIDGFKDCVQLVNFQCKEDGIIAQAVDDSRVLLVSLEIGVEAFQEYRCDHPVTLGMDLTSLSKILRCGNNTDTLTLIADNTPDSIILLFEDTKKDRIAEYSLKLMDIDADFLKIEELQYDSTLSLPSSEFSKIVRDLSQLSDSINIMITKETIKFVADGDIGSGSVIIKPFVDMEHPETSIKLEMDQPVDLTFGAKYLLDIIKGSSLSDRVGIRLSSEAPALFQFDLKSGFLQFFLAPKFNDEE.

The DNA-binding element occupies 61 to 80 (RCDHPVTLGMDLTSLSKILR). A Glycyl lysine isopeptide (Lys-Gly) (interchain with G-Cter in SUMO) cross-link involves residue Lys127. Residue Lys164 forms a Glycyl lysine isopeptide (Lys-Gly) (interchain with G-Cter in SUMO); alternate linkage. Lys164 is covalently cross-linked (Glycyl lysine isopeptide (Lys-Gly) (interchain with G-Cter in ubiquitin); alternate).

Belongs to the PCNA family. Homotrimer. Interacts with RAD30. Interacts with MCM10. Interacts with UBP10. Sumoylated on Lys-164, and to a lesser extent on Lys-127 by the UBC9/SIZ1 complex during S-phase; which impairs ubiquitination and function in DNA repair. In terms of processing, monoubiquitinated on Lys-164 by the UBC2/RAD18 complex upon DNA damage, and then polyubiquitinated through 'Lys-63'-linkage by UBC13/MMS2. Ubiquitination is required for UBC2-mediated DNA repair. Post-translationally, lys-164 is deubiquitinated by UBP10.

Its subcellular location is the nucleus. Functionally, this protein is an auxiliary protein of DNA polymerase delta and is involved in the control of eukaryotic DNA replication by increasing the polymerase's processibility during elongation of the leading strand. Involved in DNA repair. The chain is Proliferating cell nuclear antigen (POL30) from Saccharomyces cerevisiae (strain ATCC 204508 / S288c) (Baker's yeast).